The chain runs to 587 residues: MSSSSSITTTLPLCTNKSLSSSFTTTNSSLLSKPSQLFLHGRRNQSFKVSCNANNVDKNPDAVDRRNVLLGLGGLYGAANLAPLATAAPIPPPDLKSCGTAHVKEGVDVIYSCCPPVPDDIDSVPYYKFPSMTKLRIRPPAHAADEEYVAKYQLATSRMRELDKDPFDPLGFKQQANIHCAYCNGAYKVGGKELQVHFSWLFFPFHRWYLYFYERILGSLINDPTFALPYWNWDHPKGMRIPPMFDREGSSLYDEKRNQNHRNGTIIDLGHFGKEVDTPQLQIMTNNLTLMYRQMVTNAPCPSQFFGAAYPLGSEPSPGQGTIENIPHTPVHIWTGDKPRQKNGEDMGNFYSAGLDPIFYCHHANVDRMWNEWKLIGGKRRDLTDKDWLNSEFFFYDENRNPYRVKVRDCLDSKKMGFDYAPMPTPWRNFKPIRKSSSGKVNTASIAPVSKVFPLAKLDRAISFSITRPASSRTTQEKNEQEEILTFNKISYDDRNYVRFDVFLNVDKTVNADELDKAEFAGSYTSLPHVHGSNTNHVTSLTFKLAITELLEDIGLEDEDTIAVTLVPKAGGEEVSIESVEIKLEDC.

The N-terminal 87 residues, 1–87, are a transit peptide targeting the chloroplast; that stretch reads MSSSSSITTT…AANLAPLATA (87 aa). Cystine bridges form between C98–C114 and C113–C180. Cu cation-binding residues include H179, H197, H206, H328, H332, and H363. Positions 183–197 form a cross-link, 2'-(S-cysteinyl)-histidine (Cys-His); the sequence is CNGAYKVGGKELQVH.

This sequence belongs to the tyrosinase family. Cu(2+) is required as a cofactor.

Its subcellular location is the plastid. The protein resides in the chloroplast thylakoid lumen. It carries out the reaction 2 catechol + O2 = 2 1,2-benzoquinone + 2 H2O. Functionally, catalyzes the oxidation of mono- and o-diphenols to o-diquinones. This is Polyphenol oxidase E, chloroplastic from Solanum lycopersicum (Tomato).